The primary structure comprises 538 residues: GSY2-interacting protein PIG2 (538 aa).

A phosphoserine mark is found at S162, S196, S296, and S304. The 125-residue stretch at 384–508 (LNLSRGRPVF…NNDSANYKID (125 aa)) folds into the CBM21 domain.

Interacts with glycogen synthase 2 (GSY2); possibly also interacts with phosphatase 1 (GLC7). This is GSY2-interacting protein PIG2 (PIG2) from Saccharomyces cerevisiae (strain ATCC 204508 / S288c) (Baker's yeast).